Consider the following 147-residue polypeptide: E3 ubiquitin-protein ligase RHA2B (147 aa).

The RING-type; atypical zinc finger occupies 74–116 (CIVCLSKLKTGEEVRKLDCRHVFHKQCLEGWLQHLNFNCPLCR).

Interacts with NAC19. Expressed in vascular tissue, root tips, embryos and pistils.

Its subcellular location is the cytoplasm. It is found in the nucleus. The enzyme catalyses S-ubiquitinyl-[E2 ubiquitin-conjugating enzyme]-L-cysteine + [acceptor protein]-L-lysine = [E2 ubiquitin-conjugating enzyme]-L-cysteine + N(6)-ubiquitinyl-[acceptor protein]-L-lysine.. It participates in protein modification; protein ubiquitination. In terms of biological role, E3 ubiquitin-protein ligase involved in the positive regulation of abscisic acid (ABA) signaling and responses to salt and osmotic stresses during seed germination and early seedling development. Acts additively with RHA2A in regulating ABA signaling and drought response. Possesses E3 ubiquitin ligase activity in vitro. The polypeptide is E3 ubiquitin-protein ligase RHA2B (Arabidopsis thaliana (Mouse-ear cress)).